The following is a 441-amino-acid chain: Chitinase-like protein Idgf3 (441 aa).

The signal sequence occupies residues 1 to 23 (MSGSLWLSLALSLAVLAQFKVSA). The GH18 domain occupies 25 to 441 (PNLVCFYDSQ…MLRAIKYRLL (417 aa)). Cysteine 29 and cysteine 56 are disulfide-bonded. The N-linked (GlcNAc...) asparagine glycan is linked to asparagine 221. Residues 310 to 331 (GDSGMPVVSSTQGPAPAGPQSK) form a disordered region. Residues cysteine 342 and cysteine 425 are joined by a disulfide bond.

The protein belongs to the glycosyl hydrolase 18 family. IDGF subfamily. Post-translationally, glycosylated.

It localises to the secreted. Cooperates with insulin-like peptides to stimulate the proliferation, polarization and motility of imaginal disk cells. May act by stabilizing the binding of insulin-like peptides to its receptor through a simultaneous interaction with both molecules to form a multiprotein signaling complex. This chain is Chitinase-like protein Idgf3 (Idgf3), found in Drosophila simulans (Fruit fly).